Here is a 235-residue protein sequence, read N- to C-terminus: MDIKVKDFEGPLDLLLHLVSKYEVDVYQVPIVEVIEQYLAYIETLQTMRLELAGEYMLMASQLMLIKSRRLLPKLVDKEPDEEDLEQELLGKIEEYSRFKALSQELASQHDKRALLFSKPKQELIFEQAVLQKDKTVMDLFLAFSQLMAAKQEAFKYNHTVIERDDYRIEDMMELIEARLELEQELTLTDLLKHCDHLNEAITLFLASLELIKRQLVGIEQTSHFGQIVLRKEIQ.

Belongs to the ScpA family. As to quaternary structure, component of a cohesin-like complex composed of ScpA, ScpB and the Smc homodimer, in which ScpA and ScpB bind to the head domain of Smc. The presence of the three proteins is required for the association of the complex with DNA.

It is found in the cytoplasm. Functionally, participates in chromosomal partition during cell division. May act via the formation of a condensin-like complex containing Smc and ScpB that pull DNA away from mid-cell into both cell halves. This chain is Segregation and condensation protein A, found in Streptococcus equi subsp. zooepidemicus (strain H70).